Here is a 26-residue protein sequence, read N- to C-terminus: Nicotinic acetylcholine receptor-binding protein Mnn-1A (26 aa).

Cysteine 3 and cysteine 22 are disulfide-bonded.

The protein belongs to the three-finger toxin family. Short-chain subfamily. In terms of tissue distribution, expressed by the venom gland.

It localises to the secreted. Its function is as follows. Binds and may inhibit nicotinic acetylcholine receptors (nAChR). This Micrurus nigrocinctus (Central American coral snake) protein is Nicotinic acetylcholine receptor-binding protein Mnn-1A.